Here is a 473-residue protein sequence, read N- to C-terminus: Photosystem II CP43 reaction center protein (473 aa).

Residues 1 to 14 (MKTLYSLRRFYHVE) constitute a propeptide that is removed on maturation. Position 15 is an N-acetylthreonine (threonine 15). A Phosphothreonine modification is found at threonine 15. 5 helical membrane-spanning segments follow: residues 69–93 (LFEVAHFVPEKPMYEQGLILLPHLA), 134–155 (LLGPETLEESFPFFGYVWKDRN), 178–200 (KALYFGGVYDTWAPGGGDVRKIA), 255–275 (KPFAWARRAFVWSGEAYLSYS), and 291–312 (WFNNTAYPSEFYGPTGPEASQA). Glutamate 367 serves as a coordination point for [CaMn4O5] cluster. The helical transmembrane segment at 447–471 (RARAAAAGFEKGIDRDFEPVLSMTP) threads the bilayer.

Belongs to the PsbB/PsbC family. PsbC subfamily. In terms of assembly, PSII is composed of 1 copy each of membrane proteins PsbA, PsbB, PsbC, PsbD, PsbE, PsbF, PsbH, PsbI, PsbJ, PsbK, PsbL, PsbM, PsbT, PsbX, PsbY, PsbZ, Psb30/Ycf12, at least 3 peripheral proteins of the oxygen-evolving complex and a large number of cofactors. It forms dimeric complexes. Binds multiple chlorophylls and provides some of the ligands for the Ca-4Mn-5O cluster of the oxygen-evolving complex. It may also provide a ligand for a Cl- that is required for oxygen evolution. PSII binds additional chlorophylls, carotenoids and specific lipids. is required as a cofactor.

It is found in the plastid membrane. In terms of biological role, one of the components of the core complex of photosystem II (PSII). It binds chlorophyll and helps catalyze the primary light-induced photochemical processes of PSII. PSII is a light-driven water:plastoquinone oxidoreductase, using light energy to abstract electrons from H(2)O, generating O(2) and a proton gradient subsequently used for ATP formation. The protein is Photosystem II CP43 reaction center protein of Cuscuta exaltata (Tall dodder).